Consider the following 139-residue polypeptide: Invertebrate-type lysozyme 2 (139 aa).

Positions 1–18 (MFVKAILLLSIAVAYASA) are cleaved as a signal peptide. Residues 19–138 (DCLHCICMRE…WKGVHSCCGC (120 aa)) form the I-type lysozyme domain. 7 disulfides stabilise this stretch: Cys20-Cys106, Cys23-Cys138, Cys25-Cys31, Cys36-Cys45, Cys58-Cys86, Cys76-Cys82, and Cys98-Cys120. The Proton donor role is filled by Glu28. The active-site Nucleophile is the Asp39. 51–57 (KIPYYED) contacts substrate. Residues Tyr90 and 113 to 115 (HNG) contribute to the substrate site.

The protein belongs to the glycosyl hydrolase 22 family. Type-I lysozyme subfamily. As to expression, expressed in pharyngeal muscle cell pm3, nerve ring and intestine.

It carries out the reaction Hydrolysis of (1-&gt;4)-beta-linkages between N-acetylmuramic acid and N-acetyl-D-glucosamine residues in a peptidoglycan and between N-acetyl-D-glucosamine residues in chitodextrins.. Its function is as follows. Has bacteriolytic activity against Gram-positive bacteria. May play a role in resistance to Gram-positive bacterium S.aureus infection. The protein is Invertebrate-type lysozyme 2 of Caenorhabditis elegans.